Reading from the N-terminus, the 527-residue chain is MQNHNRQEVDKRRTFAIISHPDAGKTTITEKLLLFGGAIQQAGEVRARKSARHATSDWMELEKQRGISVTSSVMKFTYNGCEINLLDTPGHNDFSEDTYRVLTAVDSVLMVIDSVKGVESQTKKLLEVCRLRHTPIITFMNKLDREGQEPLDLLDDIEKNLKMQTAPVTWPVGMGKRFRGTYHLYTKELIFFDAEAANGTGRILTIAGLNDPLLDELLGSQVDELRHDVELLEGAANPFDKEAYLAGQQTPVFFGSAINTFGVQQLLDAFIEYAPAPLPRETTTRVVSPYEEPFSGFTFKIQANMDPAHRDRIAFFRICSGKFTRGMKVRHTRLGREVQIANATIFMAQDRTNVEEAWPGDIIGIHNHGTIKIGDTFTQGEELKFTGIPSFAPEHFRKVRLLNPLKSKALEKGLIQLAEEGATQVFKPLMGADWVIGAVGLLQFEVVMHRLEFEYSVKVAFEPVSYVTARWVTGERKKVEEFEKREAMHVYIDGEGKLTYMAGSQWRLDNTIESWKELSFHETSEHS.

One can recognise a tr-type G domain in the interval 10–278 (DKRRTFAIIS…AFIEYAPAPL (269 aa)). Residues 19–26 (SHPDAGKT), 87–91 (DTPGH), and 141–144 (NKLD) each bind GTP.

Belongs to the TRAFAC class translation factor GTPase superfamily. Classic translation factor GTPase family. PrfC subfamily.

The protein localises to the cytoplasm. Increases the formation of ribosomal termination complexes and stimulates activities of RF-1 and RF-2. It binds guanine nucleotides and has strong preference for UGA stop codons. It may interact directly with the ribosome. The stimulation of RF-1 and RF-2 is significantly reduced by GTP and GDP, but not by GMP. The chain is Peptide chain release factor 3 from Pelobacter propionicus (strain DSM 2379 / NBRC 103807 / OttBd1).